Here is a 493-residue protein sequence, read N- to C-terminus: Lysostaphin (493 aa).

The N-terminal stretch at 1 to 23 is a signal peptide; the sequence is MKKTKNNYYTRPLAIGLSTFALA. The propeptide occupies 24-247; the sequence is SIVYGGIQNE…ALVQNRTALR (224 aa). 14 consecutive repeat copies span residues 49–61, 62–74, 75–87, 88–100, 101–113, 114–126, 127–139, 140–152, 153–165, 166–178, 179–191, 192–204, 205–217, and 218–230. The segment at 49–243 is 15 X 13 AA approximate tandem repeats of A-E-V-E-T-S-K-A-P-V-E-N-T; that stretch reads AEVETSKAPV…ETSKALVQNR (195 aa). The segment at 52 to 232 is disordered; sequence ETSKAPVENT…SKAPVENTAE (181 aa). A 15; approximate repeat occupies 231 to 243; that stretch reads AEVETSKALVQNR. Positions 279 and 283 each coordinate Zn(2+). Residue His-360 is part of the active site. Residue His-362 coordinates Zn(2+). One can recognise an SH3b domain in the interval 413–481; the sequence is SESASFTPNT…YLPVRTWNKS (69 aa).

The protein belongs to the peptidase M23B family. In terms of assembly, monomer. Zn(2+) serves as cofactor.

The protein localises to the secreted. The enzyme catalyses Hydrolysis of the -Gly-|-Gly- bond in the pentaglycine inter-peptide link joining staphylococcal cell wall peptidoglycans.. Functionally, lyses staphylococcal cells by hydrolyzing the polyglycine interpeptide bridges of the peptidoglycan. This is Lysostaphin (lss) from Staphylococcus simulans.